The primary structure comprises 103 residues: Large ribosomal subunit protein bL21 (103 aa).

This sequence belongs to the bacterial ribosomal protein bL21 family. Part of the 50S ribosomal subunit. Contacts protein L20.

Functionally, this protein binds to 23S rRNA in the presence of protein L20. The chain is Large ribosomal subunit protein bL21 from Bordetella avium (strain 197N).